The sequence spans 168 residues: MSGLKAGDSFPADVVFSYIPWTEEKGEITSCGIPINYYASKEWADKKVILFALPGAFTPVCSARHVPEYIERLPEIRAKGVDVVAVLAYNDAFVMSAWGKANGVKNDDILFLSDPEAKFSKSIGWADEEGRTKRYAIVLDHGKVTYAALEPAKNHLEFSSAETVIKHL.

A Thioredoxin domain is found at 4–158 (LKAGDSFPAD…LEPAKNHLEF (155 aa)). Residue Cys-61 is the Cysteine sulfenic acid (-SOH) intermediate of the active site.

The protein belongs to the peroxiredoxin family. Prx5 subfamily. As to quaternary structure, homodimer; disulfide-linked, upon oxidation. Interacts with thioredoxin trxA.

The enzyme catalyses a hydroperoxide + [thioredoxin]-dithiol = an alcohol + [thioredoxin]-disulfide + H2O. Functionally, thiol-specific peroxidase that catalyzes the reduction of hydrogen peroxide and organic hydroperoxides to water and alcohols, respectively. Plays a role in cell protection against oxidative stress by detoxifying peroxides and as sensor of hydrogen peroxide-mediated signaling events. Involved in osmoadaptation. This Emericella nidulans (strain FGSC A4 / ATCC 38163 / CBS 112.46 / NRRL 194 / M139) (Aspergillus nidulans) protein is Putative peroxiredoxin prxA.